Here is a 77-residue protein sequence, read N- to C-terminus: Translation initiation factor IF-1, chloroplastic (77 aa).

The S1-like domain occupies 1–71 (MKEQKLIHEG…TRGRIIYRLR (71 aa)).

The protein belongs to the IF-1 family. Component of the 30S ribosomal translation pre-initiation complex which assembles on the 30S ribosome in the order IF-2 and IF-3, IF-1 and N-formylmethionyl-tRNA(fMet); mRNA recruitment can occur at any time during PIC assembly.

Its subcellular location is the plastid. The protein localises to the chloroplast. One of the essential components for the initiation of protein synthesis. Stabilizes the binding of IF-2 and IF-3 on the 30S subunit to which N-formylmethionyl-tRNA(fMet) subsequently binds. Helps modulate mRNA selection, yielding the 30S pre-initiation complex (PIC). Upon addition of the 50S ribosomal subunit IF-1, IF-2 and IF-3 are released leaving the mature 70S translation initiation complex. This chain is Translation initiation factor IF-1, chloroplastic, found in Liriodendron tulipifera (Tuliptree).